The following is a 210-amino-acid chain: Probable GTP-binding protein EngB (210 aa).

Positions 25-199 (TGIEVAFAGR…RQKLDSWFNE (175 aa)) constitute an EngB-type G domain. GTP-binding positions include 33–40 (GRSNAGKS), 60–64 (GRTQL), 78–81 (DLPG), 145–148 (TKAD), and 178–180 (FSS). The Mg(2+) site is built by S40 and T62.

Belongs to the TRAFAC class TrmE-Era-EngA-EngB-Septin-like GTPase superfamily. EngB GTPase family. The cofactor is Mg(2+).

Functionally, necessary for normal cell division and for the maintenance of normal septation. This chain is Probable GTP-binding protein EngB, found in Klebsiella pneumoniae (strain 342).